Here is a 460-residue protein sequence, read N- to C-terminus: MDLSKYPAEPFKIKSVEPVKMISREEREIAMKEAGYNTFNLRSEDVYIDLLTDSGTNAMSDAQWAGMMIGDEAYAGSKNWLFLESTIKELFGFKHVVPTHQGRGAENLLSSIAIKPGQYVAGNMYFTTTRYHQEKNGGIFVDIIRDEAHDASIDIPFKGNIDVNKLEKLIEEKGAENIAYVCLAVTVNLAGGQPVSMANMRAVRELTAKHGIKVFYDATRCVENAYFIKEQEEGYADVSIKDIVHEMFSYSDGATMSGKKDGIVNIGGFLAINDEELFGKAKEIVVVYEGMPSYGGMTGRDMQAIAIGFREAMQYEYIEHRIRQVRYLGDRLKEAGVPIVEPVGGHAVFLDARRFCPHLDQEQFPAQSLAASLYIDSGVRSMERGIVSAGRDVNTGENHKPKLETVRLTIPRRVYTYKHMDVVAESVIHLYKHKEDIRPLKFTYEPAQLRFFTAKFDYAD.

Lys-260 is modified (N6-(pyridoxal phosphate)lysine).

The protein belongs to the beta-eliminating lyase family. Homotetramer. Requires pyridoxal 5'-phosphate as cofactor.

It catalyses the reaction L-tyrosine + H2O = phenol + pyruvate + NH4(+). In Clostridium tetani (strain Massachusetts / E88), this protein is Tyrosine phenol-lyase.